We begin with the raw amino-acid sequence, 489 residues long: NADH-quinone oxidoreductase subunit N (489 aa).

Helical transmembrane passes span 6 to 26 (VLFI…AVML), 37 to 57 (VFYI…PASS), 66 to 86 (LLIV…GSLA), 105 to 125 (FYLL…AHHL), 127 to 147 (AIFI…GYAF), 159 to 179 (YMVL…LIYA), 204 to 224 (ITLL…KLSL), 239 to 259 (PAPV…AVLL), 271 to 291 (FFYS…NLLA), 299 to 319 (RLLG…LIAC), 329 to 349 (VALY…VVSL), 377 to 397 (SAMT…GFIG), 408 to 430 (FHLW…YYLR), and 452 to 472 (ALTT…LLGI).

This sequence belongs to the complex I subunit 2 family. In terms of assembly, NDH-1 is composed of 14 different subunits. Subunits NuoA, H, J, K, L, M, N constitute the membrane sector of the complex.

Its subcellular location is the cell inner membrane. The enzyme catalyses a quinone + NADH + 5 H(+)(in) = a quinol + NAD(+) + 4 H(+)(out). Its function is as follows. NDH-1 shuttles electrons from NADH, via FMN and iron-sulfur (Fe-S) centers, to quinones in the respiratory chain. The immediate electron acceptor for the enzyme in this species is believed to be ubiquinone. Couples the redox reaction to proton translocation (for every two electrons transferred, four hydrogen ions are translocated across the cytoplasmic membrane), and thus conserves the redox energy in a proton gradient. The polypeptide is NADH-quinone oxidoreductase subunit N (Tolumonas auensis (strain DSM 9187 / NBRC 110442 / TA 4)).